Here is a 1358-residue protein sequence, read N- to C-terminus: DNA-directed RNA polymerase subunit beta (1358 aa).

The protein belongs to the RNA polymerase beta chain family. As to quaternary structure, the RNAP catalytic core consists of 2 alpha, 1 beta, 1 beta' and 1 omega subunit. When a sigma factor is associated with the core the holoenzyme is formed, which can initiate transcription.

The enzyme catalyses RNA(n) + a ribonucleoside 5'-triphosphate = RNA(n+1) + diphosphate. In terms of biological role, DNA-dependent RNA polymerase catalyzes the transcription of DNA into RNA using the four ribonucleoside triphosphates as substrates. The chain is DNA-directed RNA polymerase subunit beta from Methylococcus capsulatus (strain ATCC 33009 / NCIMB 11132 / Bath).